The primary structure comprises 99 residues: UPF0235 protein Neut_2146 (99 aa).

It belongs to the UPF0235 family.

The protein is UPF0235 protein Neut_2146 of Nitrosomonas eutropha (strain DSM 101675 / C91 / Nm57).